The following is a 371-amino-acid chain: Glycosyltransferase 8 domain-containing protein 1 (371 aa).

The Cytoplasmic portion of the chain corresponds to 1–7 (MSFRKVN). Residues 8–28 (IVILVLAVALFLLVLHHNFLG) traverse the membrane as a helical; Signal-anchor for type II membrane protein segment. At 29 to 371 (LSSLLRNEVS…RRHVEISNTK (343 aa)) the chain is on the lumenal side. Residues asparagine 103 and asparagine 257 are each glycosylated (N-linked (GlcNAc...) asparagine).

It belongs to the glycosyltransferase 8 family.

Its subcellular location is the membrane. The sequence is that of Glycosyltransferase 8 domain-containing protein 1 (GLT8D1) from Bos taurus (Bovine).